Consider the following 86-residue polypeptide: MSDQEKISHTVIGRVVSDKMDKTITVLIERKVAHSLYKKYVRRFTKLHAHDENNECRMGDIVAIAGTRPLSKTKAWKLVDILERAR.

The protein belongs to the universal ribosomal protein uS17 family. In terms of assembly, part of the 30S ribosomal subunit.

Functionally, one of the primary rRNA binding proteins, it binds specifically to the 5'-end of 16S ribosomal RNA. The chain is Small ribosomal subunit protein uS17 from Nitrosococcus oceani (strain ATCC 19707 / BCRC 17464 / JCM 30415 / NCIMB 11848 / C-107).